Reading from the N-terminus, the 445-residue chain is mRNA cleavage and polyadenylation factor CLP1 (445 aa).

ATP-binding positions include Asp33, Lys72, and 133-138 (QTGKTS).

Belongs to the Clp1 family. Clp1 subfamily. As to quaternary structure, component of the cleavage factor IA (CF IA) complex, which is a heterohexameric complex with 2:2:1:1 stoichiometry of RNA14, RNA15, PCF11 and CLP1. It contains 2 copies of an RNA14-RNA15 dimer and 1 copy of CLP1-PCF11. The complex interacts with the cleavage factor HRB1/CF IB to form the cleavage factor I (CF I) complex, and binds to RNA. Interacts directly with PCF11. Interacts with the CPF components CFT1, PTA1, PFS2, YSH1 and SSU72.

Its subcellular location is the nucleus. Its function is as follows. Component of the cleavage factor IA (CF IA) complex, which is involved in the endonucleolytic cleavage during polyadenylation-dependent pre-mRNA 3'-end formation. Associates with HRB1/CF IB to form the cleavage factor I (CF I) complex. CF I is required for correct positioning of a larger protein complex, the cleavage and polyadenylation factor (CPF) complex, which contains the catalytic subunits executing mRNA cleavage and polyadenylation. CLP1 mediates interactions between CF IA and CPF factors. CLP1 is also involved in maintaining the CF IA interaction with the C-terminal domain of RNA Pol II largest subunit via PCF11, which links pre-mRNA 3'-end processing to transcription termination. The sequence is that of mRNA cleavage and polyadenylation factor CLP1 from Saccharomyces cerevisiae (strain YJM789) (Baker's yeast).